Consider the following 191-residue polypeptide: Dephospho-CoA kinase (191 aa).

The DPCK domain maps to 3–191 (AIGITGSYAS…KLIKDLECRV (189 aa)). An ATP-binding site is contributed by 11–16 (ASGKTF).

It belongs to the CoaE family.

The protein resides in the cytoplasm. It catalyses the reaction 3'-dephospho-CoA + ATP = ADP + CoA + H(+). Its pathway is cofactor biosynthesis; coenzyme A biosynthesis; CoA from (R)-pantothenate: step 5/5. In terms of biological role, catalyzes the phosphorylation of the 3'-hydroxyl group of dephosphocoenzyme A to form coenzyme A. The protein is Dephospho-CoA kinase of Rickettsia conorii (strain ATCC VR-613 / Malish 7).